The chain runs to 212 residues: External core antigen (212 aa).

Residues 1-19 (MQLFHLCLIIFCSCPTVQA) form the signal peptide. The segment at 25–27 (GWL) is HBEAG. Residues 165–212 (NAPILSTLPETTVVRQRGRAPRRRTPSPRRRRSQSPRRRRSQSPASQC) form a disordered region. The span at 180-205 (QRGRAPRRRTPSPRRRRSQSPRRRRS) shows a compositional bias: basic residues. The 1; half-length repeat unit spans residues 184–190 (APRRRTP). The tract at residues 184–206 (APRRRTPSPRRRRSQSPRRRRSQ) is 3 X 8 AA repeats of S-P-R-R-R-R-S-Q. Positions 184–212 (APRRRTPSPRRRRSQSPRRRRSQSPASQC) are excised as a propeptide. A run of 2 repeats spans residues 191–198 (SPRRRRSQ) and 199–206 (SPRRRRSQ).

The protein belongs to the orthohepadnavirus precore antigen family. In terms of assembly, homodimerizes. Phosphorylated. In terms of processing, cleaved by host furin.

The protein localises to the secreted. It localises to the host nucleus. Functionally, may regulate immune response to the intracellular capsid in acting as a T-cell tolerogen, by having an immunoregulatory effect which prevents destruction of infected cells by cytotoxic T-cells. This immune regulation may predispose to chronicity during perinatal infections and prevent severe liver injury during adult infections. This Hepatitis B virus genotype H subtype adw4 (isolate Nicaragua/2928Nic/1997) (HBV-H) protein is External core antigen.